We begin with the raw amino-acid sequence, 592 residues long: Proline--tRNA ligase (592 aa).

The protein belongs to the class-II aminoacyl-tRNA synthetase family. ProS type 1 subfamily. As to quaternary structure, homodimer.

The protein localises to the cytoplasm. The enzyme catalyses tRNA(Pro) + L-proline + ATP = L-prolyl-tRNA(Pro) + AMP + diphosphate. Catalyzes the attachment of proline to tRNA(Pro) in a two-step reaction: proline is first activated by ATP to form Pro-AMP and then transferred to the acceptor end of tRNA(Pro). As ProRS can inadvertently accommodate and process non-cognate amino acids such as alanine and cysteine, to avoid such errors it has two additional distinct editing activities against alanine. One activity is designated as 'pretransfer' editing and involves the tRNA(Pro)-independent hydrolysis of activated Ala-AMP. The other activity is designated 'posttransfer' editing and involves deacylation of mischarged Ala-tRNA(Pro). The misacylated Cys-tRNA(Pro) is not edited by ProRS. In Corynebacterium urealyticum (strain ATCC 43042 / DSM 7109), this protein is Proline--tRNA ligase.